Reading from the N-terminus, the 180-residue chain is NAD(P)H-quinone oxidoreductase subunit I, chloroplastic (180 aa).

4Fe-4S ferredoxin-type domains lie at 55-84 and 95-124; these read GRIH…VDWK and LNYS…MTEE. Positions 64, 67, 70, 74, 104, 107, 110, and 114 each coordinate [4Fe-4S] cluster.

Belongs to the complex I 23 kDa subunit family. As to quaternary structure, NDH is composed of at least 16 different subunits, 5 of which are encoded in the nucleus. It depends on [4Fe-4S] cluster as a cofactor.

It is found in the plastid. The protein resides in the chloroplast thylakoid membrane. It carries out the reaction a plastoquinone + NADH + (n+1) H(+)(in) = a plastoquinol + NAD(+) + n H(+)(out). It catalyses the reaction a plastoquinone + NADPH + (n+1) H(+)(in) = a plastoquinol + NADP(+) + n H(+)(out). In terms of biological role, NDH shuttles electrons from NAD(P)H:plastoquinone, via FMN and iron-sulfur (Fe-S) centers, to quinones in the photosynthetic chain and possibly in a chloroplast respiratory chain. The immediate electron acceptor for the enzyme in this species is believed to be plastoquinone. Couples the redox reaction to proton translocation, and thus conserves the redox energy in a proton gradient. The chain is NAD(P)H-quinone oxidoreductase subunit I, chloroplastic from Ranunculus macranthus (Large buttercup).